The chain runs to 124 residues: Small ribosomal subunit protein uS12 (124 aa).

A disordered region spans residues 1 to 24; sequence MPTINQLVRRPRKPSVSANKAPAL. D90 is subject to 3-methylthioaspartic acid.

This sequence belongs to the universal ribosomal protein uS12 family. Part of the 30S ribosomal subunit. Contacts proteins S8 and S17. May interact with IF1 in the 30S initiation complex.

Its function is as follows. With S4 and S5 plays an important role in translational accuracy. Functionally, interacts with and stabilizes bases of the 16S rRNA that are involved in tRNA selection in the A site and with the mRNA backbone. Located at the interface of the 30S and 50S subunits, it traverses the body of the 30S subunit contacting proteins on the other side and probably holding the rRNA structure together. The combined cluster of proteins S8, S12 and S17 appears to hold together the shoulder and platform of the 30S subunit. This is Small ribosomal subunit protein uS12 from Anaplasma phagocytophilum (strain HZ).